The sequence spans 249 residues: ATP-dependent dethiobiotin synthetase BioD (249 aa).

11 to 16 (NVGKTI) is a binding site for ATP. Thr-15 contacts Mg(2+). The active site involves Lys-31. A substrate-binding site is contributed by Thr-35. ATP-binding positions include Asp-40, 127 to 130 (EGAG), 188 to 189 (NS), and 215 to 217 (PYL). The Mg(2+) site is built by Asp-40 and Glu-127.

It belongs to the dethiobiotin synthetase family. In terms of assembly, homodimer. The cofactor is Mg(2+).

It localises to the cytoplasm. It catalyses the reaction (7R,8S)-7,8-diammoniononanoate + CO2 + ATP = (4R,5S)-dethiobiotin + ADP + phosphate + 3 H(+). Its pathway is cofactor biosynthesis; biotin biosynthesis; biotin from 7,8-diaminononanoate: step 1/2. Functionally, catalyzes a mechanistically unusual reaction, the ATP-dependent insertion of CO2 between the N7 and N8 nitrogen atoms of 7,8-diaminopelargonic acid (DAPA, also called 7,8-diammoniononanoate) to form a ureido ring. The chain is ATP-dependent dethiobiotin synthetase BioD from Neorickettsia sennetsu (strain ATCC VR-367 / Miyayama) (Ehrlichia sennetsu).